Reading from the N-terminus, the 217-residue chain is Glyoxalase ElbB (217 aa).

The Nucleophile role is filled by Cys-135.

Belongs to the peptidase C56 family. In terms of assembly, homodimer.

It catalyses the reaction glyoxal + H2O = glycolate + H(+). Its function is as follows. Displays glyoxalase activity, catalyzing the conversion of glyoxal to glycolate. However, this apparent glyoxalase activity may reflect a protein deglycase activity, which could be the primary function of this protein like other DJ-1 superfamily members such as PARK7, YajL, YhbO and HchA. Is not able to use methylglyoxal as substrate. This is Glyoxalase ElbB from Escherichia coli (strain K12).